The primary structure comprises 278 residues: 4-deoxy-L-threo-5-hexosulose-uronate ketol-isomerase (278 aa).

Positions 196, 198, 203, and 245 each coordinate Zn(2+).

The protein belongs to the KduI family. Zn(2+) serves as cofactor.

It carries out the reaction 5-dehydro-4-deoxy-D-glucuronate = 3-deoxy-D-glycero-2,5-hexodiulosonate. It participates in glycan metabolism; pectin degradation; 2-dehydro-3-deoxy-D-gluconate from pectin: step 4/5. Its function is as follows. Catalyzes the isomerization of 5-dehydro-4-deoxy-D-glucuronate to 3-deoxy-D-glycero-2,5-hexodiulosonate. This is 4-deoxy-L-threo-5-hexosulose-uronate ketol-isomerase from Yersinia pseudotuberculosis serotype O:1b (strain IP 31758).